Consider the following 184-residue polypeptide: Large ribosomal subunit protein uL6 (184 aa).

Belongs to the universal ribosomal protein uL6 family. In terms of assembly, part of the 50S ribosomal subunit.

This protein binds to the 23S rRNA, and is important in its secondary structure. It is located near the subunit interface in the base of the L7/L12 stalk, and near the tRNA binding site of the peptidyltransferase center. This chain is Large ribosomal subunit protein uL6, found in Thermosipho melanesiensis (strain DSM 12029 / CIP 104789 / BI429).